A 52-amino-acid polypeptide reads, in one-letter code: Eukaryotic translation initiation factor 2 subunit 1 (52 aa).

Residues 16–52 enclose the S1 motif domain; that stretch reads EDVVMVNVRSIAEMGAYVSLLEYNNIEGRILLSELSR. Position 48 is a phosphoserine; by HRI (serine 48). Position 51 is a phosphoserine (serine 51).

It belongs to the eIF-2-alpha family. In terms of assembly, eukaryotic translation initiation factor 2 eIF2 is a heterotrimeric complex composed of an alpha (EIF2S1), a beta (EIF2S2) and a gamma (EIF2S3) chain. eIF2 is member of the 43S pre-initiation complex (43S PIC). eIF2 forms a complex with at least CELF1/CUGBP1, CALR, CALR3, EIF2S1, EIF2S2, HSP90B1 and HSPA5. Interaction with METAP2 protects EIF2S1 from inhibitory phosphorylation. Interacts with ABCF1. Associates with ribosomes. Interacts with DDX3X in an RNA-independent manner. In terms of processing, phosphorylation at Ser-48 and Ser-51 stabilizes the eIF-2/GDP/eIF2B complex and prevents GDP/GTP exchange reaction, thus impairing the recycling of eIF-2 between successive rounds of initiation and leading to global inhibition of translation, while concomitantly initiating the preferential translation of integrated stress response (ISR)-specific mRNAs. Substrate for at least 4 kinases: EIF2AK1/HRI, EIF2AK2/PKR, EIF2AK3/PERK and EIF2AK4/GCN2. Phosphorylation on Ser-51 by the EIF2AK4/GCN2 protein kinase occurs in response to amino acid starvation and UV irradiation. Phosphorylation at Ser-51 by the EIF2AK3/PERK protein kinase occurs in response to the unfolded protein response. Phosphorylation at Ser-51 by EIF2AK1/HRI in response to mitochondrial damage promotes relocalization to the mitochondrial surface.

It localises to the cytoplasm. The protein resides in the stress granule. Its subcellular location is the cytosol. The protein localises to the mitochondrion. Its activity is regulated as follows. Activity is regulated by phosphorylation at Ser-49 and Ser-52, which stabilizes the eIF2/GDP/eIF2B complex and prevents the eIF2B-mediated exchange of GDP for GTP, thereby preventing the formation of the 43S pre-initiation complex (43S PIC). This results in the global attenuation of 5' cap-dependent protein synthesis and concomitant translation of ISR-specific mRNAs that contain a short upstream open reading frame (uORF) in their 5' UTR, such as ATF4, ATF5, DDIT3/CHOP and PPP1R15A/GADD34. Its function is as follows. Member of the eIF2 complex that functions in the early steps of protein synthesis by forming a ternary complex with GTP and initiator tRNA. This complex binds to a 40S ribosomal subunit, followed by mRNA binding to form a 43S pre-initiation complex. Junction of the 60S ribosomal subunit to form the 80S initiation complex is preceded by hydrolysis of the GTP bound to eIF2 and release of an eIF2-GDP binary complex. In order for eIF2 to recycle and catalyze another round of initiation, the GDP bound to eIF2 must exchange with GTP by way of a reaction catalyzed by eIF2B. EIF2S1/eIF2-alpha is a key component of the integrated stress response (ISR), required for adaptation to various stress: phosphorylation by metabolic-stress sensing protein kinases (EIF2AK1/HRI, EIF2AK2/PKR, EIF2AK3/PERK and EIF2AK4/GCN2) in response to stress converts EIF2S1/eIF2-alpha in a global protein synthesis inhibitor, leading to a attenuation of cap-dependent translation, while concomitantly initiating the preferential translation of ISR-specific mRNAs, such as the transcriptional activators ATF4 and QRICH1, and hence allowing ATF4- and QRICH1-mediated reprogramming. EIF2S1/eIF2-alpha also acts as an activator of mitophagy in response to mitochondrial damage: phosphorylation by EIF2AK1/HRI promotes relocalization to the mitochondrial surface, thereby triggering PRKN-independent mitophagy. This is Eukaryotic translation initiation factor 2 subunit 1 (EIF2S1) from Oryctolagus cuniculus (Rabbit).